Consider the following 223-residue polypeptide: Adenine phosphoribosyltransferase (223 aa).

It belongs to the purine/pyrimidine phosphoribosyltransferase family. Homodimer.

The protein resides in the cytoplasm. It carries out the reaction AMP + diphosphate = 5-phospho-alpha-D-ribose 1-diphosphate + adenine. It participates in purine metabolism; AMP biosynthesis via salvage pathway; AMP from adenine: step 1/1. Functionally, catalyzes a salvage reaction resulting in the formation of AMP, that is energically less costly than de novo synthesis. In Mycobacterium bovis (strain ATCC BAA-935 / AF2122/97), this protein is Adenine phosphoribosyltransferase.